Consider the following 194-residue polypeptide: GTP cyclohydrolase 1 (194 aa).

3 residues coordinate Zn(2+): C83, H86, and C155.

This sequence belongs to the GTP cyclohydrolase I family. In terms of assembly, toroid-shaped homodecamer, composed of two pentamers of five dimers.

It carries out the reaction GTP + H2O = 7,8-dihydroneopterin 3'-triphosphate + formate + H(+). Its pathway is cofactor biosynthesis; 7,8-dihydroneopterin triphosphate biosynthesis; 7,8-dihydroneopterin triphosphate from GTP: step 1/1. The sequence is that of GTP cyclohydrolase 1 (folE) from Streptococcus pyogenes.